Reading from the N-terminus, the 319-residue chain is Beta-sarcoglycan (319 aa).

Residues 1–10 (MAAAAAAAAA) show a composition bias toward low complexity. Residues 1 to 33 (MAAAAAAAAAEQQSSNGPVKKSMREKAVERRNV) are disordered. Residues 1–66 (MAAAAAAAAA…GLRGRKGNLA (66 aa)) lie on the Cytoplasmic side of the membrane. Basic and acidic residues predominate over residues 22 to 33 (SMREKAVERRNV). A helical; Signal-anchor for type II membrane protein membrane pass occupies residues 67 to 87 (ICVIILLFILAVINLIITLVI). The Extracellular portion of the chain corresponds to 88–318 (WAVIRIGPNG…QISDNPCGNT (231 aa)). N-linked (GlcNAc...) asparagine glycans are attached at residues N159, N212, and N259. 2 cysteine pairs are disulfide-bonded: C289/C315 and C291/C308.

This sequence belongs to the sarcoglycan beta/delta/gamma/zeta family. As to quaternary structure, cross-link to form 2 major subcomplexes: one consisting of SGCB, SGCD and SGCG and the other consisting of SGCB and SGCD. The association between SGCB and SGCG is particularly strong while SGCA is loosely associated with the other sarcoglycans. Post-translationally, disulfide bonds are present.

The protein resides in the cell membrane. It is found in the sarcolemma. It localises to the cytoplasm. Its subcellular location is the cytoskeleton. Component of the sarcoglycan complex, a subcomplex of the dystrophin-glycoprotein complex which forms a link between the F-actin cytoskeleton and the extracellular matrix. This Pongo abelii (Sumatran orangutan) protein is Beta-sarcoglycan (SGCB).